Reading from the N-terminus, the 1048-residue chain is FERM, ARHGEF and pleckstrin domain-containing protein 1 (1048 aa).

The interval 1–37 is disordered; that stretch reads MGEIEQKPTPASRLGAPENSGISTLERGQKPPPTPSG. Phosphoserine is present on residues Ser-20 and Ser-23. A Phosphothreonine modification is found at Thr-24. Positions 40–320 constitute an FERM domain; sequence MTVKIQMLDD…EHHAFFRLFE (281 aa). Phosphoserine is present on residues Ser-340, Ser-373, Ser-389, Ser-403, Ser-427, Ser-433, and Ser-437. The disordered stretch occupies residues 361–536; it reads FERKHSKIHS…TDDEEEGRRK (176 aa). Residues 371–395 are compositionally biased toward polar residues; that stretch reads TRSLVSQPTAPNSEVPKQSPQSASL. 2 stretches are compositionally biased toward polar residues: residues 472-491 and 498-513; these read STGSLTGSPHLSELSINSQG and VTLSPNLSPDNKQASP. 2 positions are modified to phosphoserine: Ser-512 and Ser-516. One can recognise a DH domain in the interval 542–733; the sequence is KAYYIAKEVS…TEMVAQLHGT (192 aa). Residues 762-859 enclose the PH 1 domain; that stretch reads EFIRLGSLSK…WMEDIQMAID (98 aa). Phosphoserine is present on residues Ser-836, Ser-875, and Ser-881. A disordered region spans residues 865-907; it reads NGPTPELLASSPPDNKSPDEATAADQESEDDLSASRTSLERQA. A Phosphothreonine modification is found at Thr-886. Ser-892, Ser-899, and Ser-902 each carry phosphoserine. The PH 2 domain maps to 935–1032; sequence ENQLSGNLLR…WMEVIRSATS (98 aa).

In terms of assembly, interacts with CADM1. Interacts with RAC1. Detected in brain cortex, hippocampus, striatum, olfactory bulb, cerebellum and hindbrain (at protein level).

Its subcellular location is the cell membrane. The protein resides in the synapse. The protein localises to the synaptosome. It localises to the cytoplasm. It is found in the cytosol. Its subcellular location is the cell projection. The protein resides in the filopodium. The protein localises to the dendrite. It localises to the dendritic spine. Its function is as follows. Functions as a guanine nucleotide exchange factor for RAC1. May play a role in semaphorin signaling. Plays a role in the assembly and disassembly of dendritic filopodia, the formation of dendritic spines, regulation of dendrite length and ultimately the formation of synapses. The chain is FERM, ARHGEF and pleckstrin domain-containing protein 1 (Farp1) from Mus musculus (Mouse).